A 169-amino-acid polypeptide reads, in one-letter code: MYTAGYAHRDSSFSSTASKIARVSTENTTAGLISEVVYREDQPMMTQLLLLPLLQQLGQQSRWQLWLTPQQKLSREWVQASGLPLTKVMQISQLSPCHTVESMVRALRTGNYSVVIGWLADDLTEEEHAELVDAANEGNAMGFIMRPVSASSHATRQLSGLKIHSNLYH.

The interval 106-112 is ftsZ binding; that stretch reads ALRTGNY. The segment at 162-169 is lon protease binding; that stretch reads KIHSNLYH.

This sequence belongs to the SulA family. Interacts with FtsZ. Post-translationally, is rapidly cleaved and degraded by the Lon protease once DNA damage is repaired.

Functionally, component of the SOS system and an inhibitor of cell division. Accumulation of SulA causes rapid cessation of cell division and the appearance of long, non-septate filaments. In the presence of GTP, binds a polymerization-competent form of FtsZ in a 1:1 ratio, thus inhibiting FtsZ polymerization and therefore preventing it from participating in the assembly of the Z ring. This mechanism prevents the premature segregation of damaged DNA to daughter cells during cell division. The protein is Cell division inhibitor SulA of Escherichia coli O45:K1 (strain S88 / ExPEC).